Here is a 215-residue protein sequence, read N- to C-terminus: Protein Thf1 (215 aa).

Residues 188 to 209 (IELVQETIAAERRKKERRQAEQ) are a coiled coil.

It belongs to the THF1 family.

May be involved in photosynthetic membrane biogenesis. This chain is Protein Thf1, found in Synechococcus sp. (strain CC9902).